A 166-amino-acid polypeptide reads, in one-letter code: Small ribosomal subunit protein uS5 (166 aa).

An S5 DRBM domain is found at 12–75; it reads YIEKLVQVNR…EAARRNMIQV (64 aa).

It belongs to the universal ribosomal protein uS5 family. As to quaternary structure, part of the 30S ribosomal subunit. Contacts proteins S4 and S8.

Its function is as follows. With S4 and S12 plays an important role in translational accuracy. In terms of biological role, located at the back of the 30S subunit body where it stabilizes the conformation of the head with respect to the body. This chain is Small ribosomal subunit protein uS5, found in Pseudomonas syringae pv. tomato (strain ATCC BAA-871 / DC3000).